The following is a 163-amino-acid chain: 6,7-dimethyl-8-ribityllumazine synthase (163 aa).

5-amino-6-(D-ribitylamino)uracil-binding positions include F27, 58–60 (ALE), and 87–89 (CVV). Residue 92-93 (DT) coordinates (2S)-2-hydroxy-3-oxobutyl phosphate. The active-site Proton donor is the H95. Residue N120 coordinates 5-amino-6-(D-ribitylamino)uracil. Position 134 (R134) interacts with (2S)-2-hydroxy-3-oxobutyl phosphate.

Belongs to the DMRL synthase family.

It catalyses the reaction (2S)-2-hydroxy-3-oxobutyl phosphate + 5-amino-6-(D-ribitylamino)uracil = 6,7-dimethyl-8-(1-D-ribityl)lumazine + phosphate + 2 H2O + H(+). The protein operates within cofactor biosynthesis; riboflavin biosynthesis; riboflavin from 2-hydroxy-3-oxobutyl phosphate and 5-amino-6-(D-ribitylamino)uracil: step 1/2. Functionally, catalyzes the formation of 6,7-dimethyl-8-ribityllumazine by condensation of 5-amino-6-(D-ribitylamino)uracil with 3,4-dihydroxy-2-butanone 4-phosphate. This is the penultimate step in the biosynthesis of riboflavin. The sequence is that of 6,7-dimethyl-8-ribityllumazine synthase from Nitrobacter hamburgensis (strain DSM 10229 / NCIMB 13809 / X14).